Reading from the N-terminus, the 275-residue chain is Exosome complex component Rrp42 (275 aa).

This sequence belongs to the RNase PH family. Rrp42 subfamily. Component of the archaeal exosome complex. Forms a hexameric ring-like arrangement composed of 3 Rrp41-Rrp42 heterodimers. The hexameric ring associates with a trimer of Rrp4 and/or Csl4 subunits.

The protein resides in the cytoplasm. In terms of biological role, non-catalytic component of the exosome, which is a complex involved in RNA degradation. Contributes to the structuring of the Rrp41 active site. This is Exosome complex component Rrp42 from Saccharolobus islandicus (strain M.16.27) (Sulfolobus islandicus).